A 97-amino-acid polypeptide reads, in one-letter code: Large ribosomal subunit protein eL21 (97 aa).

It belongs to the eukaryotic ribosomal protein eL21 family.

This chain is Large ribosomal subunit protein eL21, found in Methanococcus aeolicus (strain ATCC BAA-1280 / DSM 17508 / OCM 812 / Nankai-3).